The sequence spans 359 residues: Probable dual-specificity RNA methyltransferase RlmN (359 aa).

The active-site Proton acceptor is the E93. Residues 107–337 enclose the Radical SAM core domain; the sequence is KSERVTLCVS…VTMRYEKGHD (231 aa). A disulfide bridge links C114 with C342. Residues C121, C125, and C128 each coordinate [4Fe-4S] cluster. S-adenosyl-L-methionine contacts are provided by residues 168–169, S200, 223–225, and N299; these read GE and SLH. Catalysis depends on C342, which acts as the S-methylcysteine intermediate.

This sequence belongs to the radical SAM superfamily. RlmN family. The cofactor is [4Fe-4S] cluster.

It is found in the cytoplasm. The catalysed reaction is adenosine(2503) in 23S rRNA + 2 reduced [2Fe-2S]-[ferredoxin] + 2 S-adenosyl-L-methionine = 2-methyladenosine(2503) in 23S rRNA + 5'-deoxyadenosine + L-methionine + 2 oxidized [2Fe-2S]-[ferredoxin] + S-adenosyl-L-homocysteine. It carries out the reaction adenosine(37) in tRNA + 2 reduced [2Fe-2S]-[ferredoxin] + 2 S-adenosyl-L-methionine = 2-methyladenosine(37) in tRNA + 5'-deoxyadenosine + L-methionine + 2 oxidized [2Fe-2S]-[ferredoxin] + S-adenosyl-L-homocysteine. Functionally, specifically methylates position 2 of adenine 2503 in 23S rRNA and position 2 of adenine 37 in tRNAs. The sequence is that of Probable dual-specificity RNA methyltransferase RlmN from Akkermansia muciniphila (strain ATCC BAA-835 / DSM 22959 / JCM 33894 / BCRC 81048 / CCUG 64013 / CIP 107961 / Muc).